The sequence spans 252 residues: 2-succinyl-6-hydroxy-2,4-cyclohexadiene-1-carboxylate synthase (252 aa).

It belongs to the AB hydrolase superfamily. MenH family. Monomer.

The catalysed reaction is 5-enolpyruvoyl-6-hydroxy-2-succinyl-cyclohex-3-ene-1-carboxylate = (1R,6R)-6-hydroxy-2-succinyl-cyclohexa-2,4-diene-1-carboxylate + pyruvate. It participates in quinol/quinone metabolism; 1,4-dihydroxy-2-naphthoate biosynthesis; 1,4-dihydroxy-2-naphthoate from chorismate: step 3/7. Its pathway is quinol/quinone metabolism; menaquinone biosynthesis. In terms of biological role, catalyzes a proton abstraction reaction that results in 2,5-elimination of pyruvate from 2-succinyl-5-enolpyruvyl-6-hydroxy-3-cyclohexene-1-carboxylate (SEPHCHC) and the formation of 2-succinyl-6-hydroxy-2,4-cyclohexadiene-1-carboxylate (SHCHC). This is 2-succinyl-6-hydroxy-2,4-cyclohexadiene-1-carboxylate synthase from Shigella flexneri serotype 5b (strain 8401).